A 136-amino-acid polypeptide reads, in one-letter code: Small ribosomal subunit protein eS8 (136 aa).

The protein belongs to the eukaryotic ribosomal protein eS8 family. Part of the 30S ribosomal subunit.

The protein is Small ribosomal subunit protein eS8 (rps8e) of Aeropyrum pernix (strain ATCC 700893 / DSM 11879 / JCM 9820 / NBRC 100138 / K1).